Here is a 461-residue protein sequence, read N- to C-terminus: Cysteine--tRNA ligase (461 aa).

Residue cysteine 28 participates in Zn(2+) binding. Residues 30–40 carry the 'HIGH' region motif; it reads VTIYDLCHIGH. Residues cysteine 211, histidine 236, and glutamate 240 each coordinate Zn(2+). Residues 268–272 carry the 'KMSKS' region motif; that stretch reads KMSKS. Lysine 271 contributes to the ATP binding site.

This sequence belongs to the class-I aminoacyl-tRNA synthetase family. In terms of assembly, monomer. Zn(2+) is required as a cofactor.

The protein resides in the cytoplasm. The enzyme catalyses tRNA(Cys) + L-cysteine + ATP = L-cysteinyl-tRNA(Cys) + AMP + diphosphate. In Aliivibrio fischeri (strain ATCC 700601 / ES114) (Vibrio fischeri), this protein is Cysteine--tRNA ligase.